The chain runs to 1907 residues: Receptor-type tyrosine-protein phosphatase F (1907 aa).

A signal peptide spans 1-29 (MAPEPAPGRTMVPLVPALVMLGLVAGAHG). The Extracellular segment spans residues 30-1263 (DSKPVFIKVP…QQQEEPEMLW (1234 aa)). Ig-like C2-type domains follow at residues 33–123 (PVFI…AKLS), 135–224 (PSID…ANLY), and 232–314 (PRFS…AQVT). Cys54 and Cys107 are oxidised to a cystine. 68-77 (KKGKKVSSQR) contributes to the heparin binding site. A glycan (N-linked (GlcNAc...) asparagine) is linked at Asn117. A disulfide bridge connects residues Cys156 and Cys207. 2 N-linked (GlcNAc...) asparagine glycosylation sites follow: Asn250 and Asn295. Residues Cys253 and Cys298 are joined by a disulfide bond. 8 Fibronectin type-III domains span residues 321–411 (PPID…TGEQ), 416–510 (PPRR…TQQG), 514–604 (QPAD…TAQS), 609–706 (PPQK…TDED), 711–819 (PPRK…TTGA), 820–914 (VPGR…PEDL), 918–1010 (FPQN…TMPV), and 1014–1098 (FAKN…TAPD). A disordered region spans residues 398 to 417 (GPPSEAVRARTGEQAPSSPP). Residues 693–712 (GPESSPVLVRTDEDVPSGPP) form a disordered region. Asn721 is a glycosylation site (N-linked (GlcNAc...) asparagine). N-linked (GlcNAc...) asparagine glycosylation is present at Asn966. Residues 1264-1284 (VTGPVLAVILIILIVIAILLF) form a helical membrane-spanning segment. At 1285–1907 (KRKRTHSPSS…YLGSFDHYAT (623 aa)) the chain is on the cytoplasmic side. Ser1305 carries the phosphoserine modification. Tyrosine-protein phosphatase domains lie at 1352–1607 (FSQE…LLEA) and 1639–1898 (MELE…ALEY). Residues Asp1516, 1548–1554 (CSAGVGR), and Gln1592 each bind substrate. Catalysis depends on Cys1548, which acts as the Phosphocysteine intermediate. The active-site Phosphocysteine intermediate is the Cys1839.

It belongs to the protein-tyrosine phosphatase family. Receptor class 2A subfamily. Interacts with GRIP1. Interacts with PPFIA1, PPFIA2 and PPFIA3. Interacts with INSR.

It is found in the membrane. It carries out the reaction O-phospho-L-tyrosyl-[protein] + H2O = L-tyrosyl-[protein] + phosphate. Functionally, possible cell adhesion receptor. It possesses an intrinsic protein tyrosine phosphatase activity (PTPase) and dephosphorylates EPHA2 regulating its activity. Its function is as follows. The first PTPase domain has enzymatic activity, while the second one seems to affect the substrate specificity of the first one. The polypeptide is Receptor-type tyrosine-protein phosphatase F (PTPRF) (Homo sapiens (Human)).